The following is a 92-amino-acid chain: DNA-binding protein HU (92 aa).

It belongs to the bacterial histone-like protein family. In terms of assembly, homodimer.

Its function is as follows. Histone-like DNA-binding protein which is capable of wrapping DNA to stabilize it, and thus to prevent its denaturation under extreme environmental conditions. The protein is DNA-binding protein HU (hup) of Buchnera aphidicola subsp. Baizongia pistaciae (strain Bp).